We begin with the raw amino-acid sequence, 593 residues long: NADH-quinone oxidoreductase subunit C/D (593 aa).

An NADH dehydrogenase I subunit C region spans residues 1–184 (MTADNALYIP…DPYSLTLAKQ (184 aa)). Positions 208 to 593 (DYMFLNLGPN…IDFVMADVDR (386 aa)) are NADH dehydrogenase I subunit D.

It in the N-terminal section; belongs to the complex I 30 kDa subunit family. The protein in the C-terminal section; belongs to the complex I 49 kDa subunit family. NDH-1 is composed of 13 different subunits. Subunits NuoB, CD, E, F, and G constitute the peripheral sector of the complex.

The protein localises to the cell inner membrane. It catalyses the reaction a quinone + NADH + 5 H(+)(in) = a quinol + NAD(+) + 4 H(+)(out). NDH-1 shuttles electrons from NADH, via FMN and iron-sulfur (Fe-S) centers, to quinones in the respiratory chain. The immediate electron acceptor for the enzyme in this species is believed to be ubiquinone. Couples the redox reaction to proton translocation (for every two electrons transferred, four hydrogen ions are translocated across the cytoplasmic membrane), and thus conserves the redox energy in a proton gradient. This chain is NADH-quinone oxidoreductase subunit C/D, found in Pseudomonas savastanoi pv. phaseolicola (strain 1448A / Race 6) (Pseudomonas syringae pv. phaseolicola (strain 1448A / Race 6)).